Consider the following 325-residue polypeptide: dITP/XTP pyrophosphatase (325 aa).

Positions 1–128 (MKEKIYEYKD…KKVSELGDTI (128 aa)) are unknown. An NTP pyrophosphatase region spans residues 129 to 324 (LIATRNEGKT…MEVFPAWQNA (196 aa)). 132–137 (TRNEGK) provides a ligand contact to substrate. 2 residues coordinate Mg(2+): Glu-165 and Asp-194. The Proton acceptor role is filled by Asp-194. Substrate is bound by residues Ser-195, 278–281 (FGYD), Lys-301, and 306–307 (HR).

The protein belongs to the HAM1 NTPase family. As to quaternary structure, homodimer. The cofactor is Mg(2+).

It carries out the reaction XTP + H2O = XMP + diphosphate + H(+). The enzyme catalyses dITP + H2O = dIMP + diphosphate + H(+). It catalyses the reaction ITP + H2O = IMP + diphosphate + H(+). Pyrophosphatase that catalyzes the hydrolysis of nucleoside triphosphates to their monophosphate derivatives, with a high preference for the non-canonical purine nucleotides XTP (xanthosine triphosphate), dITP (deoxyinosine triphosphate) and ITP. Seems to function as a house-cleaning enzyme that removes non-canonical purine nucleotides from the nucleotide pool, thus preventing their incorporation into DNA/RNA and avoiding chromosomal lesions. In Streptococcus mutans serotype c (strain ATCC 700610 / UA159), this protein is dITP/XTP pyrophosphatase.